Consider the following 325-residue polypeptide: Beta-ketoacyl-[acyl-carrier-protein] synthase III (325 aa).

Catalysis depends on residues cysteine 114 and histidine 252. The segment at 253-257 is ACP-binding; it reads QANFR. The active site involves asparagine 282.

Belongs to the thiolase-like superfamily. FabH family. In terms of assembly, homodimer.

The protein localises to the cytoplasm. It carries out the reaction malonyl-[ACP] + acetyl-CoA + H(+) = 3-oxobutanoyl-[ACP] + CO2 + CoA. The protein operates within lipid metabolism; fatty acid biosynthesis. Its function is as follows. Catalyzes the condensation reaction of fatty acid synthesis by the addition to an acyl acceptor of two carbons from malonyl-ACP. Catalyzes the first condensation reaction which initiates fatty acid synthesis and may therefore play a role in governing the total rate of fatty acid production. Possesses both acetoacetyl-ACP synthase and acetyl transacylase activities. Its substrate specificity determines the biosynthesis of branched-chain and/or straight-chain of fatty acids. The protein is Beta-ketoacyl-[acyl-carrier-protein] synthase III of Novosphingobium aromaticivorans (strain ATCC 700278 / DSM 12444 / CCUG 56034 / CIP 105152 / NBRC 16084 / F199).